The primary structure comprises 303 residues: E3 ubiquitin-protein ligase CHIP (303 aa).

Over residues 1-10 (MKGKEEKEGG) the composition is skewed to basic and acidic residues. The segment at 1–30 (MKGKEEKEGGARLGAGGGSPEKSPSAQELK) is disordered. Residue Lys2 forms a Glycyl lysine isopeptide (Lys-Gly) (interchain with G-Cter in ubiquitin) linkage. Residue Ser19 is modified to Phosphoserine. A Glycyl lysine isopeptide (Lys-Gly) (interchain with G-Cter in ubiquitin) cross-link involves residue Lys22. A phosphoserine mark is found at Ser23 and Ser25. TPR repeat units follow at residues 26-59 (AQEL…NPLV), 60-93 (AVYY…DGQS), and 95-127 (KAHF…AKEQ). The segment at 101-200 (GQCQLEMESY…SHVRAQQACI (100 aa)) is required for interaction with MAPK7. Positions 142–196 (AKKKRWNSIEERRIHQESELHSYLSRLIAAERERELEECQRNHEGDEDDSHVRAQ) are required for interaction with and ubiquitination of MYOCD. The segment at 143-197 (KKKRWNSIEERRIHQESELHSYLSRLIAAERERELEECQRNHEGDEDDSHVRAQQ) is required for interaction with FOXO1. Positions 143-303 (KKKRWNSIEE…ISENGWVEDY (161 aa)) are required for ubiquitination of FOXO1. Ser149 carries the post-translational modification Phosphoserine. Residues Lys221 and Lys255 each participate in a glycyl lysine isopeptide (Lys-Gly) (interchain with G-Cter in ubiquitin) cross-link. One can recognise a U-box domain in the interval 226-300 (DIPDYLCGKI…DAFISENGWV (75 aa)). Ser273 carries the post-translational modification Phosphoserine.

As to quaternary structure, homodimer. Interacts with BAG2. Interacts with E2 ubiquitin conjugating enzymes UBE2D1, UBE2D2 and UBE2D3. Detected in a ternary complex containing STUB1, HSPA1A and HSPBP1. Part of a complex composed of STUB1/CHIP, VCP/p97, CHRNA3, and UBXN2A that modulates the ubiquitination and endoplasmic reticulum-associated degradation (ERAD) of CHRNA3. Within the complex UBXN2A acts as a scaffold protein required for the interaction of CHRNA3 with VCP/p97, this interaction also inhibits CHRNA3 ubiquitination by STUB1/CHIP and subsequently ERAD. Interacts with MKKS. Interacts with DNAAF4. Interacts (when monoubiquitinated) with ATXN3. Interacts with UBE2W. Interacts (via the U-box domain) with the UBE2V2-UBE2N heterodimer; the complex has a specific 'Lys-63'-linked polyubiquitination activity. Interacts with DNAJB6. Interacts with FLCN. Interacts with HSP90AA1. Interacts with HSP90. Interacts with UBE2N and UBE2V1. Interacts (via TPR repeats) with HSPA8 (via C-terminus). Interacts (via TPR repeats) with HSPA1A (via C-terminus). Interacts with the non-acetylated form of HSPA1A and HSPA1B. Interacts with SMAD3 and HSP90AB1. Interacts with UBE4B. Interacts with PRMT5. Interacts with MYOCD (via C-terminus). Interacts with FOXO1 (when phosphorylated on 'Ser-256'). Interacts with MAPK7/ERK5; the interaction is enhanced in the presence of IGF1 or MAP2K5 and promotes STUB1/CHIP E3 ligase activity. Interacts with and ubiquitinates ESR1; the interaction is promoted in the absence of estradiol (17-beta-estradiol/E2). Interacts with ESR2. Interacts with and ubiquitinates NFATC3; HSPA1A/HSP70 is required as a co-chaperone. In macrophages, interacts with PAQR3; the interaction promotes PPARG poylubiquitination and STUB1-mediated degradation. Component of the chaperone-assisted selective autophagy (CASA) complex consisting of BAG3, HSPA8/HSC70, HSPB8 and STUB1/CHIP. Post-translationally, monoubiquitinated at Lys-2 following cell stress by UBE2W, promoting the interaction with ATXN3. Auto-ubiquitinated; mediated by UBE2D1 and UBE2D2 and enhanced in the presence of MAP2K5. Expressed in differentiated myotubes (at protein level). Highly expressed in skeletal muscle, heart, pancreas, brain and placenta. Detected in kidney, liver and lung.

It localises to the cytoplasm. It is found in the nucleus. Its subcellular location is the mitochondrion. It catalyses the reaction S-ubiquitinyl-[E2 ubiquitin-conjugating enzyme]-L-cysteine + [acceptor protein]-L-lysine = [E2 ubiquitin-conjugating enzyme]-L-cysteine + N(6)-ubiquitinyl-[acceptor protein]-L-lysine.. Its pathway is protein modification; protein ubiquitination. E3 ubiquitin-protein ligase which targets misfolded chaperone substrates towards proteasomal degradation. Plays a role in the maintenance of mitochondrial morphology and promotes mitophagic removal of dysfunctional mitochondria; thereby acts as a protector against apoptosis in response to cellular stress. Negatively regulates vascular smooth muscle contraction, via degradation of the transcriptional activator MYOCD and subsequent loss of transcription of genes involved in vascular smooth muscle contraction. Promotes survival and proliferation of cardiac smooth muscle cells via ubiquitination and degradation of FOXO1, resulting in subsequent repression of FOXO1-mediated transcription of pro-apoptotic genes. Ubiquitinates ICER-type isoforms of CREM and targets them for proteasomal degradation, thereby acts as a positive effector of MAPK/ERK-mediated inhibition of apoptosis in cardiomyocytes. Inhibits lipopolysaccharide-induced apoptosis and hypertrophy in cardiomyocytes, via ubiquitination and subsequent proteasomal degradation of NFATC3. Collaborates with ATXN3 in the degradation of misfolded chaperone substrates: ATXN3 restricting the length of ubiquitin chain attached to STUB1/CHIP substrates and preventing further chain extension. Ubiquitinates NOS1 in concert with Hsp70 and Hsp40. Modulates the activity of several chaperone complexes, including Hsp70, Hsc70 and Hsp90. Ubiquitinates CHRNA3 targeting it for endoplasmic reticulum-associated degradation in cortical neurons, as part of the STUB1-VCP-UBXN2A complex. Ubiquitinates and promotes ESR1 proteasomal degradation in response to age-related circulating estradiol (17-beta-estradiol/E2) decline, thereby promotes neuronal apoptosis in response to ischemic reperfusion injury. Mediates transfer of non-canonical short ubiquitin chains to HSPA8 that have no effect on HSPA8 degradation. Mediates polyubiquitination of DNA polymerase beta (POLB) at 'Lys-41', 'Lys-61' and 'Lys-81', thereby playing a role in base-excision repair: catalyzes polyubiquitination by amplifying the HUWE1/ARF-BP1-dependent monoubiquitination and leading to POLB-degradation by the proteasome. Mediates polyubiquitination of CYP3A4. Ubiquitinates EPHA2 and may regulate the receptor stability and activity through proteasomal degradation. Acts as a co-chaperone for HSPA1A and HSPA1B chaperone proteins and promotes ubiquitin-mediated protein degradation. Negatively regulates the suppressive function of regulatory T-cells (Treg) during inflammation by mediating the ubiquitination and degradation of FOXP3 in a HSPA1A/B-dependent manner. Catalyzes monoubiquitination of SIRT6, preventing its degradation by the proteasome. Likely mediates polyubiquitination and down-regulates plasma membrane expression of PD-L1/CD274, an immune inhibitory ligand critical for immune tolerance to self and antitumor immunity. Negatively regulates TGF-beta signaling by modulating the basal level of SMAD3 via ubiquitin-mediated degradation. Plays a role in the degradation of TP53. Mediates ubiquitination of RIPK3 leading to its subsequent proteasome-dependent degradation. May regulate myosin assembly in striated muscles together with UBE4B and VCP/p97 by targeting myosin chaperone UNC45B for proteasomal degradation. Ubiquitinates PPARG in macrophages playing a role in M2 macrophages polarization and angiogenesis. In Homo sapiens (Human), this protein is E3 ubiquitin-protein ligase CHIP.